A 172-amino-acid polypeptide reads, in one-letter code: Inorganic pyrophosphatase (172 aa).

Lys-29, Arg-43, and Tyr-55 together coordinate substrate. Mg(2+) contacts are provided by Asp-65, Asp-70, and Asp-102. Position 141 (Tyr-141) interacts with substrate.

The protein belongs to the PPase family. In terms of assembly, homohexamer. Mg(2+) is required as a cofactor.

It is found in the cytoplasm. It carries out the reaction diphosphate + H2O = 2 phosphate + H(+). Catalyzes the hydrolysis of inorganic pyrophosphate (PPi) forming two phosphate ions. This chain is Inorganic pyrophosphatase, found in Rickettsia prowazekii (strain Madrid E).